The following is a 133-amino-acid chain: Male-specific protein scotti (133 aa).

A disordered region spans residues 11-57; that stretch reads FPSNGLGNNNNDPNQQRGERPRQPHPDLGWILDAPNEPPRNRNPLLY. Residues 14 to 24 show a composition bias toward low complexity; sequence NGLGNNNNDPN. The N-linked (GlcNAc...) asparagine glycan is linked to asparagine 83.

Belongs to the male-specific scotti family.

Functionally, post-meiotically transcribed gene that has a role in late spermiogenesis; required for actin cone progression during spermatid individualization. The polypeptide is Male-specific protein scotti (Drosophila persimilis (Fruit fly)).